The primary structure comprises 728 residues: Bacteriophytochrome (728 aa).

C12 provides a ligand contact to a tetrapyrrole. The tract at residues 17–495 is chromophore binding domain; the sequence is IHVPGAIQPH…RLDLMELCLN (479 aa). The GAF domain occupies 139-303; the sequence is DTASLLSNVT…IFSQVCSAIV (165 aa). One can recognise a Histidine kinase domain in the interval 510–721; it reads VLGHDLRNPL…TFCLRLPVRQ (212 aa). H513 is subject to Phosphohistidine; by autocatalysis.

It in the N-terminal section; belongs to the phytochrome family. Post-translationally, contains one covalently linked tetrapyrrole chromophore.

The catalysed reaction is ATP + protein L-histidine = ADP + protein N-phospho-L-histidine.. Its function is as follows. Photoreceptor which exists in two forms that are reversibly interconvertible by light: the R form that absorbs maximally in the red region of the spectrum and the FR form that absorbs maximally in the far-red region. This chain is Bacteriophytochrome (bphP), found in Pseudomonas aeruginosa (strain ATCC 15692 / DSM 22644 / CIP 104116 / JCM 14847 / LMG 12228 / 1C / PRS 101 / PAO1).